The primary structure comprises 232 residues: 2,3-bisphosphoglycerate-dependent phosphoglycerate mutase (232 aa).

Substrate is bound by residues 10–17, 23–24, Arg-62, 89–92, Lys-100, 116–117, and 185–186; these read RHGESQWN, TG, ERHY, RR, and GN. The active-site Tele-phosphohistidine intermediate is His-11. The active-site Proton donor/acceptor is Glu-89.

The protein belongs to the phosphoglycerate mutase family. BPG-dependent PGAM subfamily. In terms of assembly, homodimer.

It carries out the reaction (2R)-2-phosphoglycerate = (2R)-3-phosphoglycerate. It functions in the pathway carbohydrate degradation; glycolysis; pyruvate from D-glyceraldehyde 3-phosphate: step 3/5. In terms of biological role, catalyzes the interconversion of 2-phosphoglycerate and 3-phosphoglycerate. The chain is 2,3-bisphosphoglycerate-dependent phosphoglycerate mutase from Blochmanniella floridana.